The chain runs to 327 residues: Phenylalanine--tRNA ligase alpha subunit (327 aa).

A Mg(2+)-binding site is contributed by glutamate 252.

It belongs to the class-II aminoacyl-tRNA synthetase family. Phe-tRNA synthetase alpha subunit type 1 subfamily. As to quaternary structure, tetramer of two alpha and two beta subunits. Mg(2+) is required as a cofactor.

The protein localises to the cytoplasm. It carries out the reaction tRNA(Phe) + L-phenylalanine + ATP = L-phenylalanyl-tRNA(Phe) + AMP + diphosphate + H(+). This chain is Phenylalanine--tRNA ligase alpha subunit, found in Salmonella choleraesuis (strain SC-B67).